The following is a 247-amino-acid chain: Sortase A (247 aa).

The Cytoplasmic portion of the chain corresponds to 1-9; the sequence is MRNKKKLHG. The helical transmembrane segment at 10-30 threads the bilayer; it reads FFNFVRWLLVVLLIIVGLALV. The Extracellular portion of the chain corresponds to 31–247; that stretch reads FNKPIRNAFI…FSKKYNQINL (217 aa). The Proton donor/acceptor role is filled by histidine 140. Cysteine 206 serves as the catalytic Acyl-thioester intermediate.

It belongs to the bacterial sortase family. Class A subfamily.

The protein resides in the cell membrane. In terms of biological role, transpeptidase that anchors surface proteins to the cell wall. Recognizes and modifies its substrate by proteolytic cleavage of a C-terminal sorting signal. Following cleavage, a covalent intermediate is formed via a thioester bond between the sortase and its substrate, which is then transferred and covalently attached to the cell wall. This sortase recognizes a Leu-Pro-x-Thr-Gly (LPXTG) motif, which is cleaved by the sortase between the threonine and glycine residues. Essential for adherence to eukaryotic cells and for binding to fibronectin and fibrinogen. The polypeptide is Sortase A (Streptococcus agalactiae serotype III (strain NEM316)).